Reading from the N-terminus, the 941-residue chain is Zinc finger protein su(Hw) (941 aa).

Disordered stretches follow at residues 1–97 and 176–211; these read MSAS…APAA and ENNNGQEIVVTEDDEDLGEDGDEDGEDSSGKGNSSQ. The segment covering 47-57 has biased composition (low complexity); it reads STTTTTSRTPS. Residues 185–202 show a composition bias toward acidic residues; sequence VTEDDEDLGEDGDEDGED. At Thr-186 the chain carries Phosphothreonine. The C2H2-type 1; atypical zinc finger occupies 220–242; that stretch reads HVCGKCYKTFRRVQSLKKHLEFC. A C2H2-type 2 zinc finger spans residues 290 to 313; the sequence is INCPDCPKSFKTQTSYERHIFITH. Residues 319–341 form a C2H2-type 3; atypical zinc finger; sequence FPCSICNANLRSEALLALHEEQH. 9 C2H2-type zinc fingers span residues 348–366, 380–402, 413–435, 441–463, 469–491, 497–519, 523–545, 553–577, and 596–619; these read YACKICGKDFTRSYHLKRH, MSCKVCDRVFYRLDNLRSHLKQH, YMCHTCKNCFYSLSTLNIHIRTH, FDCDLCDKKFSALVALKKHRRYH, YSCTVCNQAFAVKEVLNRHMKRH, HKCDECGKSFIQATQLRTHSKTH, FPCEQCDEKFKTEKQLERHVKTH, FSCAECKRNFRTPALLKEHMDEGKH, and TDCAICDKNFDSSDTLRRHIRTVH. The segment at 760-860 is interaction with mod(mdg4); it reads ILTEEDIKLK…PIDDVIEYVL (101 aa). Residues 864-941 form a disordered region; the sequence is DQDEGGLDKD…KKPVGEQEKA (78 aa). 2 stretches are compositionally biased toward basic and acidic residues: residues 869-880 and 891-941; these read GLDKDNESHSGD and KTNE…QEKA.

In terms of assembly, component of the gypsy chromatin insulator complex, composed of Cp190, mod(mdg4) and su(Hw). The gypsy chromatin insulator complex interacts with Topors via mod(mdg4) and su(Hw). Upon ecdysone stimulation, interacts with Nup98.

The protein localises to the nucleus. It is found in the chromosome. In terms of biological role, component of the gypsy chromatin insulator complex which is required for the function of the gypsy chromatin insulator and other endogenous chromatin insulators. Chromatin insulators are regulatory elements which establish independent domains of transcriptional activity within eukaryotic genomes. Insulators have two defining properties; they can block the communication between an enhancer and a promoter when placed between them and can also buffer transgenes from position effect variegation (PEV). Insulators are proposed to structure the chromatin fiber into independent domains of differing transcriptional potential by promoting the formation of distinct chromatin loops. This chromatin looping may involve the formation of insulator bodies, where homotypic interactions between individual subunits of the insulator complex could promote the clustering of widely spaced insulators at the nuclear periphery. Within the gypsy insulator complex, this protein binds specifically to a region of the gypsy element located 3' of the 5' long terminal repeat (LTR), and may also mediate interaction with other endogenous insulators at sites distinct from those recognized by Cp190. Cooperates with pita and cliff to recruit Cp190 and regulate insulator function at the front-ultraabdominal (Fub) boundary. This is Zinc finger protein su(Hw) from Drosophila melanogaster (Fruit fly).